Reading from the N-terminus, the 407-residue chain is Putative cell wall shaping protein YabE (407 aa).

An N-terminal signal peptide occupies residues 1 to 31; that stretch reads MKKLFSVKLSKSKVILVAACLLLAGSGTAYA. A G5 domain is found at 206–286; that stretch reads ITRIEKVTDV…DKVIAVGTKQ (81 aa).

Its function is as follows. Suggested to be involved in cell wall modification. The polypeptide is Putative cell wall shaping protein YabE (yabE) (Bacillus subtilis (strain 168)).